Reading from the N-terminus, the 433-residue chain is MTRRAEFEMGLFVILQSMFLISLCSSQKPEEFLPEISPDTSPQPFLPFIAPSPMVPYINSTMPKLSGLCSLNFSASESLIQTTSHNCWTVFAPLLANVMCCPQLDATLTIILGKASKETGLLALNRTQSKHCLSDLEQILVGKGASGQLNKICSIHSSNLTSSSCPVINVDEFESTVDTAKLLLACEKIDPVKECCEEACQNAILDAATNISLKASETLTDNSDRINDCKNVVNRWLATKLDPSRVKETLRGLANCKINRVCPLVFPHMKHIGGNCSNELSNQTGCCRAMESYVSHLQKQTLITNLQALDCATSLGTKLQKLNITKNIFSVCHISLKDFSLQVGNQESGCLLPSLPSDAIFDKDTGISFTCDLNDNIPAPWPSSSLSSASTCKKPVRIPALPAAASSQPRLHDEGVTRLVIFVLSMLLVMLLS.

An N-terminal signal peptide occupies residues 1-26 (MTRRAEFEMGLFVILQSMFLISLCSS). 8 N-linked (GlcNAc...) asparagine glycosylation sites follow: Asn-59, Asn-72, Asn-125, Asn-159, Asn-210, Asn-275, Asn-282, and Asn-323. A lipid anchor (GPI-anchor amidated alanine) is attached at Ala-405. Positions 406–433 (SSQPRLHDEGVTRLVIFVLSMLLVMLLS) are cleaved as a propeptide — removed in mature form.

The protein localises to the cell membrane. This is an uncharacterized protein from Arabidopsis thaliana (Mouse-ear cress).